We begin with the raw amino-acid sequence, 381 residues long: Arrestin-C (381 aa).

This sequence belongs to the arrestin family. In terms of assembly, homodimer; disulfide-linked in response to retinal illumination. Interacts with CXCR4; the interaction is dependent on the C-terminal phosphorylation of CXCR4 and modulates the calcium ion mobilization activity of CXCR4. Interacts with GPR84. Inner and outer segments, and the inner plexiform regions of the retina.

It is found in the photoreceptor inner segment. It localises to the cell projection. Its subcellular location is the cilium. The protein localises to the photoreceptor outer segment. May play a role in an as yet undefined retina-specific signal transduction. Could bind to photoactivated-phosphorylated red/green opsins. The protein is Arrestin-C (Arr3) of Mus musculus (Mouse).